Consider the following 2546-residue polypeptide: Formin-J (2546 aa).

13 disordered regions span residues 1–40, 61–108, 188–270, 369–414, 502–541, 802–849, 879–898, 987–1101, 1485–1529, 1558–1601, 1659–1775, 1840–1869, and 2014–2033; these read MEEN…SFVK, ENSN…PLSE, KNIT…PNSA, TTNN…SSSS, TNSF…TPNS, SSIS…NTRK, TSVP…NNNN, TTNN…GGIG, PKSK…ASLS, KRSK…FKSP, INNI…KVNS, VPTT…ETQS, and SNLS…SSLE. 2 stretches are compositionally biased toward low complexity: residues 16–37 and 62–98; these read NNNE…SSSS and NSNN…NSTS. Composition is skewed to polar residues over residues 99-108 and 188-198; these read GSKDNTPLSE and KNITPSKNNSP. 2 stretches are compositionally biased toward low complexity: residues 203–237 and 247–270; these read NNNN…NNNN and NKNS…PNSA. Residues 377–389 show a composition bias toward polar residues; that stretch reads AESLTTYSESSEI. Low complexity-rich tracts occupy residues 390–414 and 502–513; these read STDS…SSSS and TNSFGSSTTTTI. Residues 391–444 enclose the FHA domain; sequence TDSTGVCSSSSSTSSTLSSKSSSSSSFNKFMEFLLIYIEDNDSTNGTWVNGNKL. Residues 457–963 enclose the GBD/FH3 domain; sequence KITLSTPDFS…SSISNEQEYQ (507 aa). Polar residues-rich tracts occupy residues 879–891 and 992–1007; these read TSVP…KNPL and SSAK…NKSP. Residues 1033–1042 are compositionally biased toward pro residues; sequence VPPPPPPPPG. Residues 1043–1056 are compositionally biased toward low complexity; sequence GNNNNESDVPSSSG. Over residues 1057–1097 the composition is skewed to pro residues; that stretch reads GPPPPPPPPPPPGKSSGGGPPPPPPPPPKGGKGGPPPPPPI. In terms of domain architecture, FH1 spans 1072–1098; the sequence is SGGGPPPPPPPPPKGGKGGPPPPPPIG. An FH2 domain is found at 1106–1495; sequence KVKEEQPSVP…KSKKYQEQQN (390 aa). Residues 1492–1502 show a composition bias toward polar residues; it reads EQQNKPTQNND. Over residues 1507–1529 the composition is skewed to low complexity; that stretch reads SKLSNLPSSSSINDESSSSASLS. The region spanning 1563-1593 is the DAD domain; it reads EQEPVVEPIQITPKVGSAASAEPSPSIKSRD. Positions 1665–1679 are enriched in low complexity; the sequence is SSSSSSSSSSSSSSS. Over residues 1687–1717 the composition is skewed to basic and acidic residues; it reads HNTESEIKKEFISNSSMDKDKEKIKEKEKGT. Residues 1732–1745 show a composition bias toward low complexity; that stretch reads KSTTTSPSSSSSKK. Residues 1746-1757 show a composition bias toward polar residues; it reads QIPSLSECLQES. Composition is skewed to low complexity over residues 1763-1775 and 1841-1853; these read RSSS…KVNS and PTTT…TTQT. A coiled-coil region spans residues 2067-2118; that stretch reads IDDNQQKQQKQQQQQQQQQQQQQQLPQPQQQQQQQQQQQQQQQQQQQQQQQQ. Over residues 2121 to 2154 the composition is skewed to low complexity; the sequence is QQSTTTTTISTHHPQLKQVQPQSPSSLSQQPTQQ. Disordered stretches follow at residues 2121–2369, 2381–2473, and 2485–2510; these read QQST…PKTV, SHKK…SYSS, and SPSS…LKTP. Over residues 2160–2179 the composition is skewed to polar residues; that stretch reads QPSSPLQSHYKPQQKPQTTY. 2 stretches are compositionally biased toward low complexity: residues 2188–2206 and 2237–2256; these read ANPF…SNAS and SSAS…TPLS. Polar residues predominate over residues 2274 to 2287; that stretch reads TPPSSSISNSTATT. Over residues 2302–2315 the composition is skewed to low complexity; it reads SPSSSSLEQSSNAS. The segment covering 2332-2342 has biased composition (basic residues); it reads FKKHKKSHSKS. 3 stretches are compositionally biased toward low complexity: residues 2388 to 2439, 2459 to 2473, and 2485 to 2497; these read VDQS…SSSS, NISS…SYSS, and SPSS…KPSP. Positions 2499–2508 are enriched in polar residues; sequence AVSSTSSTLK.

Belongs to the formin homology family. Diaphanous subfamily. In terms of assembly, interacts (via GBD/FH3 domain) with activated Rho-GTPases.

Functionally, formins play an important role in the nucleation of actin and the formation of linear actin filaments. This is Formin-J (forJ) from Dictyostelium discoideum (Social amoeba).